We begin with the raw amino-acid sequence, 423 residues long: Histidine--tRNA ligase (423 aa).

Belongs to the class-II aminoacyl-tRNA synthetase family. Homodimer.

The protein resides in the cytoplasm. The enzyme catalyses tRNA(His) + L-histidine + ATP = L-histidyl-tRNA(His) + AMP + diphosphate + H(+). The protein is Histidine--tRNA ligase of Corynebacterium diphtheriae (strain ATCC 700971 / NCTC 13129 / Biotype gravis).